Reading from the N-terminus, the 219-residue chain is Thiamine-phosphate synthase (219 aa).

Residues 44–48 (QFREK) and asparagine 79 each bind 4-amino-2-methyl-5-(diphosphooxymethyl)pyrimidine. Mg(2+)-binding residues include aspartate 80 and aspartate 99. Serine 117 is a binding site for 4-amino-2-methyl-5-(diphosphooxymethyl)pyrimidine. A 2-[(2R,5Z)-2-carboxy-4-methylthiazol-5(2H)-ylidene]ethyl phosphate-binding site is contributed by 143–145 (TST). Residue lysine 146 participates in 4-amino-2-methyl-5-(diphosphooxymethyl)pyrimidine binding. Residues glycine 175 and 195-196 (IS) contribute to the 2-[(2R,5Z)-2-carboxy-4-methylthiazol-5(2H)-ylidene]ethyl phosphate site.

The protein belongs to the thiamine-phosphate synthase family. The cofactor is Mg(2+).

It carries out the reaction 2-[(2R,5Z)-2-carboxy-4-methylthiazol-5(2H)-ylidene]ethyl phosphate + 4-amino-2-methyl-5-(diphosphooxymethyl)pyrimidine + 2 H(+) = thiamine phosphate + CO2 + diphosphate. It catalyses the reaction 2-(2-carboxy-4-methylthiazol-5-yl)ethyl phosphate + 4-amino-2-methyl-5-(diphosphooxymethyl)pyrimidine + 2 H(+) = thiamine phosphate + CO2 + diphosphate. The enzyme catalyses 4-methyl-5-(2-phosphooxyethyl)-thiazole + 4-amino-2-methyl-5-(diphosphooxymethyl)pyrimidine + H(+) = thiamine phosphate + diphosphate. Its pathway is cofactor biosynthesis; thiamine diphosphate biosynthesis; thiamine phosphate from 4-amino-2-methyl-5-diphosphomethylpyrimidine and 4-methyl-5-(2-phosphoethyl)-thiazole: step 1/1. Condenses 4-methyl-5-(beta-hydroxyethyl)thiazole monophosphate (THZ-P) and 2-methyl-4-amino-5-hydroxymethyl pyrimidine pyrophosphate (HMP-PP) to form thiamine monophosphate (TMP). The chain is Thiamine-phosphate synthase from Bacillus cereus (strain AH820).